The chain runs to 585 residues: MMGLDLLVSLLALSVSPCIAATRSPLQIPVLDTQPIETGREFTLRHMLHHGTYRDPLLHKRLDIRPDTLLWAASENGEKRESVPRFRVSSRPINIHRLSDRHVSVVEDYLSIARMTSSAVTLSSDYWTLDEVDAPDVTDKETVLSLAKMTSNAYIMIPGSGEWFDVVPPFNHSDSFGWDSDGLRGHIYSDNTNSTIVVVLKGTSAAIFDGGGTTTNDKVNDNLFFSCCCAQGGHYFWRQVCDCYSSTYTCNTACVRKALRQENRYYRAALNLYSNITAMYPQSNIWVTGHSLGGAVSSLLGMTYGLPVVTFEAVPEALPASRLGLPPPPGTDPSSPQARNYTGAYHFGHTADPIYMGTCNGATSVCTLGGYAMESSCHTGQLCTYDTVEDFGWRVGIGTHRIREVITDVIERYDDVPTCAPFTECVDCNNWKFFESNETTPTPTTTTTSTSTRTRTSTCKTPGWWGCLDPTTTPTTTATTSTTSTSTCKTPGWFGCKDPTTTSTVPTASPAPTITPTSPPTTTASTTSTCESPGWFGCNDPTSTTTFPVPSTTSTSTPCSTPGWFWGCRDQTTTTSASPPITSPP.

The chain crosses the membrane as a helical; Signal-anchor for type II membrane protein span at residues 1-21; it reads MMGLDLLVSLLALSVSPCIAA. The Lumenal portion of the chain corresponds to 22-585; it reads TRSPLQIPVL…SASPPITSPP (564 aa). N-linked (GlcNAc...) asparagine glycosylation is found at Asn-171, Asn-193, and Asn-275. Ser-291 (charge relay system) is an active-site residue. N-linked (GlcNAc...) asparagine glycans are attached at residues Asn-340 and Asn-437. The tract at residues 500 to 526 is disordered; it reads TTTSTVPTASPAPTITPTSPPTTTAST.

It belongs to the AB hydrolase superfamily. Lipase family. Binds to both phosphatidylinositol (PI) and phosphatidylinositol 3,5-bisphosphate (PIP2).

The protein localises to the endosome. Its subcellular location is the multivesicular body membrane. The protein resides in the prevacuolar compartment membrane. It carries out the reaction a triacylglycerol + H2O = a diacylglycerol + a fatty acid + H(+). Its function is as follows. Lipase which is essential for lysis of subvacuolar cytoplasm to vacuole targeted bodies and intravacuolar autophagic bodies. Involved in the lysis of intravacuolar multivesicular body (MVB) vesicles. The intravacuolar membrane disintegration by ATG15 is critical to life span extension. This is Putative lipase ATG15 (ATG15) from Ajellomyces capsulatus (strain NAm1 / WU24) (Darling's disease fungus).